Here is a 269-residue protein sequence, read N- to C-terminus: Ribosomal RNA large subunit methyltransferase E (269 aa).

Positions 58, 60, 78, 96, and 120 each coordinate S-adenosyl-L-methionine. The active-site Proton acceptor is the Lys-160. The interval 234-269 (HEKKEGNETSDNDEDNNKNGLMIKKIKELRGKRSKL) is disordered. The segment covering 258–269 (KIKELRGKRSKL) has biased composition (basic and acidic residues).

This sequence belongs to the class I-like SAM-binding methyltransferase superfamily. RNA methyltransferase RlmE family.

It localises to the cytoplasm. The enzyme catalyses uridine(2552) in 23S rRNA + S-adenosyl-L-methionine = 2'-O-methyluridine(2552) in 23S rRNA + S-adenosyl-L-homocysteine + H(+). Functionally, specifically methylates the uridine in position 2552 of 23S rRNA at the 2'-O position of the ribose in the fully assembled 50S ribosomal subunit. This chain is Ribosomal RNA large subunit methyltransferase E, found in Methanococcus aeolicus (strain ATCC BAA-1280 / DSM 17508 / OCM 812 / Nankai-3).